A 323-amino-acid chain; its full sequence is L-lactate dehydrogenase (323 aa).

NAD(+) is bound by residues V18, D39, R44, Y69, and 83 to 84 (GA). Substrate is bound by residues Q86 and R92. Residues T105, 122-124 (AAN), and S147 each bind NAD(+). Position 124–127 (124–127 (NPVD)) interacts with substrate. Substrate is bound at residue 152 to 155 (DTAR). H179 (proton acceptor) is an active-site residue. The residue at position 223 (Y223) is a Phosphotyrosine. T232 serves as a coordination point for substrate.

Belongs to the LDH/MDH superfamily. LDH family. Homotetramer.

The protein resides in the cytoplasm. The enzyme catalyses (S)-lactate + NAD(+) = pyruvate + NADH + H(+). It functions in the pathway fermentation; pyruvate fermentation to lactate; (S)-lactate from pyruvate: step 1/1. In terms of biological role, catalyzes the conversion of lactate to pyruvate. This chain is L-lactate dehydrogenase, found in Pediococcus acidilactici.